Consider the following 620-residue polypeptide: Extensin (620 aa).

An N-terminal signal peptide occupies residues 1–20 (MKLSTLFALVLLLQSTAILS). Over residues 34–45 (LPPPVTSQPPPS) the composition is skewed to pro residues. Residues 34 to 620 (LPPPVTSQPP…PPYGLLLSTP (587 aa)) are disordered. The H-A-P-P repeat unit spans residues 70–73 (HAPP). Over residues 106–129 (NPPPSPVISPSHPPPSYGAPPPSH) the composition is skewed to pro residues. The span at 145–163 (SHGHAPPSGGHTPPRGQHP) shows a compositional bias: low complexity. One copy of the H-A-P-P repeat lies at 148 to 151 (HAPP). Basic residues predominate over residues 164–177 (PSHRRPSPPSRHGH). Residues 178–219 (PPPPTYAQPPPTPIYSPSPQVQPPPTYSPPPPTHVQPTPSPP) show a composition bias toward pro residues. The tract at residues 205 to 620 (SPPPPTHVQP…PPYGLLLSTP (416 aa)) is contains the Ser-Pro(4) repeats. Repeat copies occupy residues 229 to 235 (THRHAPP) and 236 to 242 (THRHAPP). Basic residues predominate over residues 229–241 (THRHAPPTHRHAP). The segment at 229-242 (THRHAPPTHRHAPP) is 2 X 7 AA tandem repeats of T-H-R-H-A-P-P. Pro residues-rich tracts occupy residues 251-552 (HLPP…PPHW) and 562-613 (GQPP…PPPY). The interval 499 to 600 (PPTFSPPPPR…PTPTYGQPPS (102 aa)) is 3 X approximate tandem repeats.

In terms of processing, hydroxylated on proline residues in the S-P-P-P-P repeat. Post-translationally, O-glycosylated on hydroxyprolines. In terms of tissue distribution, expressed in the tip of the emerging lateral roots.

The protein resides in the secreted. Its subcellular location is the primary cell wall. Functionally, has a specialized structural function, possibly in the mechanical penetration of the cortex and epidermis of the main root. The polypeptide is Extensin (HRGPNT3) (Nicotiana tabacum (Common tobacco)).